The primary structure comprises 445 residues: Phosphoglucosamine mutase (445 aa).

S102 acts as the Phosphoserine intermediate in catalysis. The Mg(2+) site is built by S102, D241, D243, and D245. S102 bears the Phosphoserine mark.

Belongs to the phosphohexose mutase family. The cofactor is Mg(2+). In terms of processing, activated by phosphorylation.

It carries out the reaction alpha-D-glucosamine 1-phosphate = D-glucosamine 6-phosphate. Catalyzes the conversion of glucosamine-6-phosphate to glucosamine-1-phosphate. This is Phosphoglucosamine mutase from Escherichia coli O157:H7.